Reading from the N-terminus, the 759-residue chain is MSVVEIEDGVYESTAVIDNGSFGTRTIRFETGRLAQQAAGAVVAYLDDETMLLSATSASKSPKDHFDFFPLTIDVEERMYAAGRIPGSFFRREGRPSTDAILTCRLIDRPLRPTFVSGLRNEIQVVVTVMSLDPKDLYDVVAINAASASTQIAGLPFSGPVGGVRVALIDGTWVAFPTVEQLERAVFDMVVAGRKTADDVAIMMVEAEATDKVVELVAGGAQAPTEAVVAEGLEAAKPFIKVLCEAQQELAGRAAKPTADYPLFPEYGEDVYYAVASVATDALSEALTIAGKEERNNRTDEIKVEVLGRLADQFAGREKEIGGAFRSLTKKLVRQRILTDHFRIDGRGVTDIRALSAEVAIVPRAHGSALFERGETQILGVTTLDMVKMAQQIDSLGPETSKRYMHHYNFPPYSTGETGRVGSPKRREIGHGALAERALMPVLPSVEEFPYAIRQVSEALSSNGSTSMGSVCASTLSLLNAGVPLKAPVAGIAMGLVSDDVEVDGKTERRFVTLTDILGAEDAFGDMDFKCAGTKDFVTALQLDTKLDGIPSQVLAGALAQAKDARITILEVMAEAIDAPDEMSPYAPRITTIKVPVDKIGEVIGPKGKMINSITEETGASISIEDDGTVFVGASNGEAAQAAIDKINAIANPQLPKIGERFLGTVVKTTDFGAFVSLLPGRDGLVHISKLGRGKRIAKVEDVAKVGDKLRVEIADIDNRGKISLVLVAEEEAAEASDNGSATPSDKAPATADATTAGN.

Asp522 and Asp528 together coordinate Mg(2+). The 60-residue stretch at Pro588–Ile647 folds into the KH domain. The S1 motif domain occupies Gly659–Val728. Residues Ala734–Asn759 form a disordered region. The span at Ser741–Asn759 shows a compositional bias: low complexity.

It belongs to the polyribonucleotide nucleotidyltransferase family. The cofactor is Mg(2+).

The protein resides in the cytoplasm. The enzyme catalyses RNA(n+1) + phosphate = RNA(n) + a ribonucleoside 5'-diphosphate. Its function is as follows. Involved in mRNA degradation. Catalyzes the phosphorolysis of single-stranded polyribonucleotides processively in the 3'- to 5'-direction. This Mycobacterium sp. (strain JLS) protein is Polyribonucleotide nucleotidyltransferase.